Consider the following 185-residue polypeptide: Elongation factor P (185 aa).

It belongs to the elongation factor P family.

The protein resides in the cytoplasm. Its pathway is protein biosynthesis; polypeptide chain elongation. Functionally, involved in peptide bond synthesis. Stimulates efficient translation and peptide-bond synthesis on native or reconstituted 70S ribosomes in vitro. Probably functions indirectly by altering the affinity of the ribosome for aminoacyl-tRNA, thus increasing their reactivity as acceptors for peptidyl transferase. This is Elongation factor P from Trichormus variabilis (strain ATCC 29413 / PCC 7937) (Anabaena variabilis).